Reading from the N-terminus, the 244-residue chain is tRNA (guanine-N(7)-)-methyltransferase (244 aa).

The span at 1–11 shows a compositional bias: pro residues; the sequence is MTDTHVPPPEL. Residues 1–23 are disordered; the sequence is MTDTHVPPPELPAAEEGEERPHR. S-adenosyl-L-methionine is bound by residues glutamate 74, glutamate 99, aspartate 126, and aspartate 149. Residue aspartate 149 is part of the active site. Substrate contacts are provided by residues lysine 153, aspartate 185, and 222–225; that span reads TKFE.

This sequence belongs to the class I-like SAM-binding methyltransferase superfamily. TrmB family.

The catalysed reaction is guanosine(46) in tRNA + S-adenosyl-L-methionine = N(7)-methylguanosine(46) in tRNA + S-adenosyl-L-homocysteine. The protein operates within tRNA modification; N(7)-methylguanine-tRNA biosynthesis. Its function is as follows. Catalyzes the formation of N(7)-methylguanine at position 46 (m7G46) in tRNA. In Pseudomonas syringae pv. tomato (strain ATCC BAA-871 / DC3000), this protein is tRNA (guanine-N(7)-)-methyltransferase.